The following is a 229-amino-acid chain: Ribonuclease 3 (229 aa).

The RNase III domain occupies leucine 5–glycine 136. Position 49 (glutamate 49) interacts with Mg(2+). Aspartate 53 is a catalytic residue. 2 residues coordinate Mg(2+): aspartate 122 and glutamate 125. Glutamate 125 is a catalytic residue. One can recognise a DRBM domain in the interval aspartate 161–arginine 229.

It belongs to the ribonuclease III family. In terms of assembly, homodimer. The cofactor is Mg(2+).

It is found in the cytoplasm. It catalyses the reaction Endonucleolytic cleavage to 5'-phosphomonoester.. Its function is as follows. Digests double-stranded RNA. Involved in the processing of primary rRNA transcript to yield the immediate precursors to the large and small rRNAs (23S and 16S). Processes some mRNAs, and tRNAs when they are encoded in the rRNA operon. Processes pre-crRNA and tracrRNA of type II CRISPR loci if present in the organism. The protein is Ribonuclease 3 of Chloroflexus aggregans (strain MD-66 / DSM 9485).